The sequence spans 913 residues: Valine--tRNA ligase (913 aa).

The 'HIGH' region signature appears at proline 48–histidine 58. A 'KMSKS' region motif is present at residues lysine 541–serine 545. ATP is bound at residue lysine 544. A coiled-coil region spans residues valine 839–valine 907.

Belongs to the class-I aminoacyl-tRNA synthetase family. ValS type 1 subfamily. Monomer.

The protein resides in the cytoplasm. The catalysed reaction is tRNA(Val) + L-valine + ATP = L-valyl-tRNA(Val) + AMP + diphosphate. Its function is as follows. Catalyzes the attachment of valine to tRNA(Val). As ValRS can inadvertently accommodate and process structurally similar amino acids such as threonine, to avoid such errors, it has a 'posttransfer' editing activity that hydrolyzes mischarged Thr-tRNA(Val) in a tRNA-dependent manner. The chain is Valine--tRNA ligase from Thermosynechococcus vestitus (strain NIES-2133 / IAM M-273 / BP-1).